We begin with the raw amino-acid sequence, 117 residues long: Protein RALF-like 27 (117 aa).

The first 27 residues, 1–27, serve as a signal peptide directing secretion; sequence MTKTFFSFSFFFTSSLLLLLAATSATA. Positions 28 to 71 are cleaved as a propeptide — removed in mature form; the sequence is STGNVTSGLRYDGCAPGDTVGECITATVEEEDEEGVEAVVRRIL. N31 carries an N-linked (GlcNAc...) asparagine glycan. 2 disulfide bridges follow: C88/C96 and C107/C113.

This sequence belongs to the plant rapid alkalinization factor (RALF) family.

The protein localises to the secreted. In terms of biological role, cell signaling peptide that may regulate plant stress, growth, and development. Mediates a rapid alkalinization of extracellular space by mediating a transient increase in the cytoplasmic Ca(2+) concentration leading to a calcium-dependent signaling events through a cell surface receptor and a concomitant activation of some intracellular mitogen-activated protein kinases. In Arabidopsis thaliana (Mouse-ear cress), this protein is Protein RALF-like 27 (RALFL27).